Reading from the N-terminus, the 351-residue chain is Hydroxymethylglutaryl-CoA synthase (351 aa).

D30 provides a ligand contact to (3S)-3-hydroxy-3-methylglutaryl-CoA. E82 acts as the Proton donor/acceptor in catalysis. The (3S)-3-hydroxy-3-methylglutaryl-CoA site is built by C114, S155, T203, and H236. The active-site Acyl-thioester intermediate is the C114. H236 serves as the catalytic Proton donor/acceptor. R241 provides a ligand contact to CoA. Residues R245, N268, and S298 each coordinate (3S)-3-hydroxy-3-methylglutaryl-CoA.

It belongs to the thiolase-like superfamily. Archaeal HMG-CoA synthase family. As to quaternary structure, interacts with acetoacetyl-CoA thiolase that catalyzes the precedent step in the pathway and with a DUF35 protein. The acetoacetyl-CoA thiolase/HMG-CoA synthase complex channels the intermediate via a fused CoA-binding site, which allows for efficient coupling of the endergonic thiolase reaction with the exergonic HMGCS reaction.

The catalysed reaction is acetoacetyl-CoA + acetyl-CoA + H2O = (3S)-3-hydroxy-3-methylglutaryl-CoA + CoA + H(+). It functions in the pathway metabolic intermediate biosynthesis; (R)-mevalonate biosynthesis; (R)-mevalonate from acetyl-CoA: step 2/3. Functionally, catalyzes the condensation of acetyl-CoA with acetoacetyl-CoA to form 3-hydroxy-3-methylglutaryl-CoA (HMG-CoA). Functions in the mevalonate (MVA) pathway leading to isopentenyl diphosphate (IPP), a key precursor for the biosynthesis of isoprenoid compounds that are building blocks of archaeal membrane lipids. The chain is Hydroxymethylglutaryl-CoA synthase from Pyrobaculum neutrophilum (strain DSM 2338 / JCM 9278 / NBRC 100436 / V24Sta) (Thermoproteus neutrophilus).